Here is a 185-residue protein sequence, read N- to C-terminus: Meiotically up-regulated gene 5 protein (185 aa).

The protein resides in the cytoplasm. Required for correct meiotic chromosome segregation. The sequence is that of Meiotically up-regulated gene 5 protein (mug5) from Schizosaccharomyces pombe (strain 972 / ATCC 24843) (Fission yeast).